A 125-amino-acid polypeptide reads, in one-letter code: Small ribosomal subunit protein uS13 (125 aa).

The protein belongs to the universal ribosomal protein uS13 family. Part of the 30S ribosomal subunit. Forms a loose heterodimer with protein S19. Forms two bridges to the 50S subunit in the 70S ribosome.

Functionally, located at the top of the head of the 30S subunit, it contacts several helices of the 16S rRNA. In the 70S ribosome it contacts the 23S rRNA (bridge B1a) and protein L5 of the 50S subunit (bridge B1b), connecting the 2 subunits; these bridges are implicated in subunit movement. Contacts the tRNAs in the A and P-sites. The polypeptide is Small ribosomal subunit protein uS13 (Gluconobacter oxydans (strain 621H) (Gluconobacter suboxydans)).